A 423-amino-acid chain; its full sequence is MAAESDVLHFQFEQQGDVVLQKMNLLRQQNLFCDVSIYINDTEFQGHKVILAACSTFMRDQFLLTQSKHVRITILQSAEVGWKLLLSCYTGALEVKRKELLKYLTAASYLQMVHIVEKCTEALSKYLEIDLSMKNNQHTDLCQSSDTDVKNEEENSDKDCEIIEISEDSPVNLDFHVKEEESNALQSAAETLTSERMRMQSPELSAVDGGFKENEICILHVESISTDDVENGQFSQPCTSSKAGIYFPETQHSLINSTVENRVTEVPGNTNQGLFSENSDGSHGTVNEIQNLDENFSLRHQCPRCPRGFLHVENYLRHLKMHKLFLCLQCGKTFTQKKNLNRHIRGHMGIRPFQCTVCLKTFTAKSTLQDHLNIHSGDRPYKCHCCDMDFKHKSALKKHLTSVHGRSSGEKLSRPDLKRQNLL.

Residues 33–97 enclose the BTB domain; that stretch reads CDVSIYINDT…CYTGALEVKR (65 aa). A Phosphoserine modification is found at Ser-201. 4 C2H2-type zinc fingers span residues 300–322, 325–347, 353–375, and 381–404; these read HQCP…LKMH, FLCL…IRGH, FQCT…LNIH, and YKCH…TSVH.

It is found in the nucleus. Functionally, may be involved in transcriptional regulation. The polypeptide is Zinc finger and BTB domain-containing protein 6 (Zbtb6) (Mus musculus (Mouse)).